A 782-amino-acid chain; its full sequence is MDEDVGLEATNYSRGDESRSEEQEKNVVRWRIVQQSTGPNPKPRHGHRAVVLKELIVIFGGGNEGMIDELHAYNTQKREWTAPQCCGDVPTPAAAFGAISLGNKIYRFGGMTEYGKYTNDLYELQSTRWEWRRLNPRVHSNGHLPCPRIGHSFVVSQKSQKAYVFGGLSNDLNDPKRNVPHYLDDLYVINLSGPQHLIWEKLNATGPGPISRESHTAVIYEKDSISRMVVYGGMNGVRLGDLWYLNLNTLHWTEIKFDDPRTGIPPMPRSLHSSVLIGDKMFVYGGWVPLLEHASTEQQTEKEWKCTSSLGCWNITEDRWVPLHLYCSDEDTIPRGRAGHCAAAVGDRMYIWSGRDGYRKAWSNQVCCRDMWLLDTILPEQPGKVQLGRAGFNSLEISWPIVQGASGYFLQIGFGDAKEQSVSPIKRATTSPRKQPSIVPPSQKETEQSPKKPQGTAPSIISTQGTTYTAPADPKPATDEGGLPQDLFEDTEKNETASPKRSNDAQSADSSTCEQKKTDESGLEEDSEKDQKPSDAGETDEMKEENGDDDLPWFDVGIIDKATINVTHYFNDRQQSLEKQLNDLIDHNAFKCVNDSVFTTEDKIPLINGQSYRFRVSAINGLGKGAWSETASCKTCVPGYPSAPSSIRITKSHEGAQLTWEPPSNTNISGKIIEYSVYLAVKNQSANSADSQLAFMRVYCGPQADCQVLQSNLGTAFVDQTNKPAIIFRIAARNEKGYGPATQVRWLQDQQKIPVRTNYPNNSGFIYQQHGGQQKRARFDHQ.

The segment at 1–25 (MDEDVGLEATNYSRGDESRSEEQEK) is disordered. Positions 14 to 25 (RGDESRSEEQEK) are enriched in basic and acidic residues. Kelch repeat units follow at residues 55–103 (LIVI…SLGN), 105–151 (IYRF…RIGH), 161–222 (KAYV…IYEK), 227–271 (RMVV…PRSL), and 280–324 (KMFV…VPLH). Phosphoserine is present on residues serine 423, serine 431, and serine 449. Polar residues predominate over residues 423–434 (SPIKRATTSPRK). The segment at 423–553 (SPIKRATTSP…EENGDDDLPW (131 aa)) is disordered. Composition is skewed to polar residues over residues 456 to 469 (TAPS…TTYT) and 496 to 513 (TASP…SSTC). A Phosphoserine modification is found at serine 498. Acidic residues predominate over residues 537–552 (GETDEMKEENGDDDLP).

In terms of assembly, interacts with daf-16/FOXO. Interacts with deacetylase sir-2.1. Interacts with the 14-3-3 family proteins ftt-2 and par-5. In terms of processing, phosphorylated at multiple serine residues. Phosphorylation is developmentally regulated, occurring in embryos but not L1 larvae. Phosphorylation may be cell-cycle-regulated.

Its subcellular location is the nucleus. Transcriptional coregulator. Involved in control of the cell cycle and in modulating mitotic histone phosphorylation. Plays a role in modulating lifespan by regulating the transcriptional activity of daf-16/Forkhead box protein O, in concert with protein deacetylase sir-2.1/SIRT1, and perhaps acting independently of the Insulin/IGF-1-like signaling (IIS) mediated pathway. Negatively modulates responses to environmental stresses, including oxidative stress, heat stress, and exposure to heavy metals; acting via regulation of the transcription factors daf-16 and skn-1. May play a role in pharyngeal development via positive modulation of expression of sup-35. This is Host cell factor homolog hcf-1 from Caenorhabditis elegans.